Consider the following 237-residue polypeptide: Demethylmenaquinone methyltransferase (237 aa).

Residues T58, D79, and N106–A107 each bind S-adenosyl-L-methionine.

This sequence belongs to the class I-like SAM-binding methyltransferase superfamily. MenG/UbiE family.

It carries out the reaction a 2-demethylmenaquinol + S-adenosyl-L-methionine = a menaquinol + S-adenosyl-L-homocysteine + H(+). It functions in the pathway quinol/quinone metabolism; menaquinone biosynthesis; menaquinol from 1,4-dihydroxy-2-naphthoate: step 2/2. Its function is as follows. Methyltransferase required for the conversion of demethylmenaquinol (DMKH2) to menaquinol (MKH2). This is Demethylmenaquinone methyltransferase from Bacillus anthracis (strain A0248).